Reading from the N-terminus, the 500-residue chain is Intracellular exo-alpha-(1-&gt;5)-L-arabinofuranosidase 1 (500 aa).

Alpha-L-arabinofuranose is bound by residues E27, N72, and N172. The active-site Proton donor/acceptor is the E173. Alpha-L-arabinofuranose is bound by residues Y244, E292, and Q349. The Nucleophile role is filled by E292.

The protein belongs to the glycosyl hydrolase 51 family. Homohexamer; trimer of dimers.

It is found in the cytoplasm. The catalysed reaction is Hydrolysis of terminal non-reducing alpha-L-arabinofuranoside residues in alpha-L-arabinosides.. It carries out the reaction (20S)-ginsenoside Rc + H2O = L-arabinofuranose + (20S)-ginsenoside Rd. It participates in glycan metabolism; L-arabinan degradation. With respect to regulation, at a concentration of 5 mM, K(+), Cu(2+) and Ni(2+) exhibit inhibitory effects on the activity. Additionally, the chemical reagent SDS also displays a certain degree of inhibition. Enzymatic activity is largely unaffected by product feedback inhibition. Involved in the degradation of arabinan and is a key enzyme in the complete degradation of the plant cell wall. Catalyzes the cleavage of terminal alpha-(1-&gt;5)-arabinofuranosyl bonds in different hemicellulosic homopolysaccharides (branched and debranched arabinans). It acts preferentially on arabinotriose, arabinobiose and linear alpha-(1-&gt;5)-L-arabinan, and is much less effective on branched sugar beet arabinan. When expressed in E.coli, the recombinant enyzme can hydrolyze, with relatively low catalytic efficiency, the terminal alpha-L-arabinofuranoside at the C20 position of ginsenoside Rc to produce ginsenoside Rd, a rare ginsenoside that exhibits diverse and powerful pharmacological activities. The polypeptide is Intracellular exo-alpha-(1-&gt;5)-L-arabinofuranosidase 1 (Bacillus subtilis (strain 168)).